A 151-amino-acid polypeptide reads, in one-letter code: Large ribosomal subunit protein uL22 (151 aa).

This sequence belongs to the universal ribosomal protein uL22 family. In terms of assembly, part of the 50S ribosomal subunit.

Functionally, this protein binds specifically to 23S rRNA. It makes multiple contacts with different domains of the 23S rRNA in the assembled 50S subunit and ribosome. The globular domain of the protein is located near the polypeptide exit tunnel on the outside of the subunit, while an extended beta-hairpin is found that lines the wall of the exit tunnel in the center of the 70S ribosome. This is Large ribosomal subunit protein uL22 from Methanococcoides burtonii (strain DSM 6242 / NBRC 107633 / OCM 468 / ACE-M).